A 641-amino-acid polypeptide reads, in one-letter code: Chaperone protein DnaK (641 aa).

Threonine 200 is subject to Phosphothreonine; by autocatalysis. Positions alanine 605 to lysine 623 are enriched in low complexity. A disordered region spans residues alanine 605–aspartate 627.

This sequence belongs to the heat shock protein 70 family.

Functionally, acts as a chaperone. The sequence is that of Chaperone protein DnaK from Xanthomonas oryzae pv. oryzae (strain MAFF 311018).